Here is a 78-residue protein sequence, read N- to C-terminus: DNA-directed RNA polymerase subunit Rpo5 (78 aa).

The protein belongs to the archaeal Rpo5/eukaryotic RPB5 RNA polymerase subunit family. In terms of assembly, part of the RNA polymerase complex.

The protein resides in the cytoplasm. It catalyses the reaction RNA(n) + a ribonucleoside 5'-triphosphate = RNA(n+1) + diphosphate. DNA-dependent RNA polymerase (RNAP) catalyzes the transcription of DNA into RNA using the four ribonucleoside triphosphates as substrates. This Methanococcus maripaludis (strain C7 / ATCC BAA-1331) protein is DNA-directed RNA polymerase subunit Rpo5.